We begin with the raw amino-acid sequence, 306 residues long: tRNA pseudouridine synthase B (306 aa).

The Nucleophile role is filled by Asp-47.

This sequence belongs to the pseudouridine synthase TruB family. Type 1 subfamily.

The enzyme catalyses uridine(55) in tRNA = pseudouridine(55) in tRNA. Responsible for synthesis of pseudouridine from uracil-55 in the psi GC loop of transfer RNAs. This is tRNA pseudouridine synthase B from Neisseria gonorrhoeae (strain NCCP11945).